The sequence spans 258 residues: 5'-nucleotidase SurE (258 aa).

A divalent metal cation contacts are provided by D8, D9, S40, and N98.

It belongs to the SurE nucleotidase family. The cofactor is a divalent metal cation.

It is found in the cytoplasm. It carries out the reaction a ribonucleoside 5'-phosphate + H2O = a ribonucleoside + phosphate. Nucleotidase that shows phosphatase activity on nucleoside 5'-monophosphates. In Synechococcus elongatus (strain ATCC 33912 / PCC 7942 / FACHB-805) (Anacystis nidulans R2), this protein is 5'-nucleotidase SurE.